The chain runs to 186 residues: MNYCPRPKYLYKKKIINKLIEKFNYKSVMQVPKLKKIVINQGINVLIYDNKTINNAINNITAITGQKAIYCLSKRDESGFKLRKGTPISIKVTLRRDIMYEFLDRLINIALPRVRDFVGVNKNSFDGEGNYNLGISEQIIFPEINTDSLKNNFGMNITFVTSSKKNKEAKYLLYLFGLPFKTKKNV.

This sequence belongs to the universal ribosomal protein uL5 family. In terms of assembly, part of the 50S ribosomal subunit; part of the 5S rRNA/L5/L18/L25 subcomplex. Contacts the 5S rRNA and the P site tRNA. Forms a bridge to the 30S subunit in the 70S ribosome.

Its function is as follows. This is one of the proteins that bind and probably mediate the attachment of the 5S RNA into the large ribosomal subunit, where it forms part of the central protuberance. In the 70S ribosome it contacts protein S13 of the 30S subunit (bridge B1b), connecting the 2 subunits; this bridge is implicated in subunit movement. Contacts the P site tRNA; the 5S rRNA and some of its associated proteins might help stabilize positioning of ribosome-bound tRNAs. The sequence is that of Large ribosomal subunit protein uL5 from Karelsulcia muelleri (strain GWSS) (Sulcia muelleri).